Here is a 2157-residue protein sequence, read N- to C-terminus: Genome polyprotein (2157 aa).

The N-myristoyl glycine; by host moiety is linked to residue Gly2. The Cytoplasmic portion of the chain corresponds to 2 to 1470 (GAQVSRQNVG…DLSIANSIIT (1469 aa)). The interval 567-584 (PIEQNPVENYIDEVLNEV) is amphipathic alpha-helix. Residues His875 and Asp892 each act as for protease 2A activity in the active site. The Zn(2+) site is built by Cys909 and Cys911. Cys963 serves as the catalytic For protease 2A activity. Zn(2+) contacts are provided by Cys969 and His971. The tract at residues 1095-1164 (SDSWLKKFTE…NLRAADNATQ (70 aa)) is membrane-binding. The oligomerization stretch occupies residues 1095–1228 (SDSWLKKFTE…PPGTGKSITT (134 aa)). An RNA-binding region spans residues 1116 to 1120 (GNKIS). An SF3 helicase domain is found at 1188–1350 (EAKRIKVLYN…YKDAQGKLNV (163 aa)). The Zn(2+) site is built by Cys1357, Cys1368, and Cys1373. Residues 1357–1373 (CNVNTKIGNAKCCPFVC) form a C4-type; degenerate zinc finger. The tract at residues 1400-1407 (EDKRRRQV) is RNA-binding. Residues 1411–1416 (MSAIFQ) form an oligomerization region. Residues 1471-1486 (IIANIISIAGIIFVIY) lie within the membrane without spanning it. Residues 1487 to 2157 (KLFCTLQGPY…LLKHEWYEKF (671 aa)) are Cytoplasmic-facing. Tyr1496 carries the post-translational modification O-(5'-phospho-RNA)-tyrosine. Residues 1515–1693 (GPEEEFGRSI…FSAMLLRSYF (179 aa)) form the Peptidase C3 domain. Residues His1554, Glu1585, and Cys1661 each act as for protease 3C activity in the active site. Residues 1925-2038 (DCIMAFDYTN…SYKYTLDMEA (114 aa)) form the RdRp catalytic domain. The Mg(2+) site is built by Asp1931 and Asp2024.

This sequence belongs to the picornaviruses polyprotein family. Interacts with capsid protein VP1 and capsid protein VP3 to form heterotrimeric protomers. In terms of assembly, interacts with capsid protein VP0, and capsid protein VP3 to form heterotrimeric protomers. Five protomers subsequently associate to form pentamers which serve as building blocks for the capsid. Interacts with capsid protein VP2, capsid protein VP3 and capsid protein VP4 following cleavage of capsid protein VP0. As to quaternary structure, interacts with capsid protein VP1 and capsid protein VP3 in the mature capsid. Interacts with capsid protein VP0 and capsid protein VP1 to form heterotrimeric protomers. Five protomers subsequently associate to form pentamers which serve as building blocks for the capsid. Interacts with capsid protein VP4 in the mature capsid. Interacts with protein 2C; this interaction may be important for virion morphogenesis. In terms of assembly, interacts with capsid protein VP1 and capsid protein VP3. As to quaternary structure, homodimer. Homohexamer; forms a hexameric ring structure with 6-fold symmetry characteristic of AAA+ ATPases. Interacts (via N-terminus) with host RTN3 (via reticulon domain); this interaction is important for viral replication. Interacts with capsid protein VP3; this interaction may be important for virion morphogenesis. In terms of assembly, interacts with protein 3CD. As to quaternary structure, homodimer. Interacts with host GBF1. Interacts (via GOLD domain) with host ACBD3 (via GOLD domain); this interaction allows the formation of a viral protein 3A/ACBD3 heterotetramer with a 2:2 stoichiometry, which will stimulate the recruitment of host PI4KB in order to synthesize PI4P at the viral RNA replication sites. Interacts with RNA-directed RNA polymerase. In terms of assembly, interacts with protein 3AB and with RNA-directed RNA polymerase. As to quaternary structure, interacts with Viral protein genome-linked and with protein 3CD. Requires Mg(2+) as cofactor. Post-translationally, specific enzymatic cleavages in vivo by the viral proteases yield processing intermediates and the mature proteins. In terms of processing, myristoylation is required for the formation of pentamers during virus assembly. Further assembly of 12 pentamers and a molecule of genomic RNA generates the provirion. During virion maturation, immature virions are rendered infectious following cleavage of VP0 into VP4 and VP2. This maturation seems to be an autocatalytic event triggered by the presence of RNA in the capsid and it is followed by a conformational change infectious virion. Post-translationally, myristoylation is required during RNA encapsidation and formation of the mature virus particle. In terms of processing, VPg is uridylylated by the polymerase into VPg-pUpU. This acts as a nucleotide-peptide primer for the genomic RNA replication.

It localises to the virion. Its subcellular location is the host cytoplasm. The protein localises to the host cytoplasmic vesicle membrane. It is found in the host nucleus. It carries out the reaction a ribonucleoside 5'-triphosphate + H2O = a ribonucleoside 5'-diphosphate + phosphate + H(+). The catalysed reaction is Selective cleavage of Tyr-|-Gly bond in the picornavirus polyprotein.. The enzyme catalyses RNA(n) + a ribonucleoside 5'-triphosphate = RNA(n+1) + diphosphate. It catalyses the reaction Selective cleavage of Gln-|-Gly bond in the poliovirus polyprotein. In other picornavirus reactions Glu may be substituted for Gln, and Ser or Thr for Gly.. Its activity is regulated as follows. Replication or transcription is subject to high level of random mutations by the nucleotide analog ribavirin. Functionally, forms an icosahedral capsid of pseudo T=3 symmetry with capsid proteins VP2 and VP3. The capsid is 300 Angstroms in diameter, composed of 60 copies of each capsid protein and enclosing the viral positive strand RNA genome. Capsid protein VP1 mainly forms the vertices of the capsid. Capsid protein VP1 interacts with host cell receptor to provide virion attachment to target host cells. This attachment induces virion internalization. Tyrosine kinases are probably involved in the entry process. After binding to its receptor, the capsid undergoes conformational changes. Capsid protein VP1 N-terminus (that contains an amphipathic alpha-helix) and capsid protein VP4 are externalized. Together, they shape a pore in the host membrane through which viral genome is translocated to host cell cytoplasm. Forms an icosahedral capsid of pseudo T=3 symmetry with capsid proteins VP2 and VP3. The capsid is 300 Angstroms in diameter, composed of 60 copies of each capsid protein and enclosing the viral positive strand RNA genome. In terms of biological role, lies on the inner surface of the capsid shell. After binding to the host receptor, the capsid undergoes conformational changes. Capsid protein VP4 is released, Capsid protein VP1 N-terminus is externalized, and together, they shape a pore in the host membrane through which the viral genome is translocated into the host cell cytoplasm. Its function is as follows. Component of immature procapsids, which is cleaved into capsid proteins VP4 and VP2 after maturation. Allows the capsid to remain inactive before the maturation step. Functionally, cysteine protease that cleaves viral polyprotein and specific host proteins. It is responsible for the autocatalytic cleavage between the P1 and P2 regions, which is the first cleavage occurring in the polyprotein. Also cleaves the host translation initiation factor EIF4G1, in order to shut down the capped cellular mRNA translation. Inhibits the host nucleus-cytoplasm protein and RNA trafficking by cleaving host members of the nuclear pores. Counteracts stress granule formation probably by antagonizing its assembly or promoting its dissassembly. Plays an essential role in the virus replication cycle by acting as a viroporin. Creates a pore in the host endoplasmic reticulum and as a consequence releases Ca2+ in the cytoplasm of infected cell. In turn, high levels of cytoplasmic calcium may trigger membrane trafficking and transport of viral ER-associated proteins to viroplasms, sites of viral genome replication. In terms of biological role, induces and associates with structural rearrangements of intracellular membranes. Displays RNA-binding, nucleotide binding and NTPase activities. May play a role in virion morphogenesis and viral RNA encapsidation by interacting with the capsid protein VP3. Its function is as follows. Localizes the viral replication complex to the surface of membranous vesicles. Together with protein 3CD binds the Cis-Active RNA Element (CRE) which is involved in RNA synthesis initiation. Acts as a cofactor to stimulate the activity of 3D polymerase, maybe through a nucleid acid chaperone activity. Functionally, localizes the viral replication complex to the surface of membranous vesicles. It inhibits host cell endoplasmic reticulum-to-Golgi apparatus transport and causes the disassembly of the Golgi complex, possibly through GBF1 interaction. This would result in depletion of MHC, trail receptors and IFN receptors at the host cell surface. Plays an essential role in viral RNA replication by recruiting ACBD3 and PI4KB at the viral replication sites, thereby allowing the formation of the rearranged membranous structures where viral replication takes place. Acts as a primer for viral RNA replication and remains covalently bound to viral genomic RNA. VPg is uridylylated prior to priming replication into VPg-pUpU. The oriI viral genomic sequence may act as a template for this. The VPg-pUpU is then used as primer on the genomic RNA poly(A) by the RNA-dependent RNA polymerase to replicate the viral genome. During genome replication, the VPg-RNA linkage is removed by the host TDP2, thereby accelerating replication. During the late stage of the replication cycle, host TDP2 is excluded from sites of viral RNA synthesis and encapsidation, allowing for the generation of progeny virions. In terms of biological role, involved in the viral replication complex and viral polypeptide maturation. It exhibits protease activity with a specificity and catalytic efficiency that is different from protease 3C. Protein 3CD lacks polymerase activity. Protein 3CD binds to the 5'UTR of the viral genome. Its function is as follows. Replicates the viral genomic RNA on the surface of intracellular membranes. May form linear arrays of subunits that propagate along a strong head-to-tail interaction called interface-I. Covalently attaches UMP to a tyrosine of VPg, which is used to prime RNA synthesis. The positive stranded RNA genome is first replicated at virus induced membranous vesicles, creating a dsRNA genomic replication form. This dsRNA is then used as template to synthesize positive stranded RNA genomes. ss(+)RNA genomes are either translated, replicated or encapsidated. Functionally, major viral protease that mediates proteolytic processing of the polyprotein. Cleaves host EIF5B, contributing to host translation shutoff. Also cleaves host PABPC1, contributing to host translation shutoff. Cleaves host NLRP1, triggers host N-glycine-mediated degradation of the autoinhibitory NLRP1 N-terminal fragment. This chain is Genome polyprotein, found in Homo sapiens (Human).